A 209-amino-acid polypeptide reads, in one-letter code: tRNA (guanine-N(7)-)-methyltransferase (209 aa).

S-adenosyl-L-methionine contacts are provided by Asp35, Glu60, Asn87, and Asp113. Asp113 is a catalytic residue. Substrate is bound by residues Lys117 and Asp149.

Belongs to the class I-like SAM-binding methyltransferase superfamily. TrmB family.

The catalysed reaction is guanosine(46) in tRNA + S-adenosyl-L-methionine = N(7)-methylguanosine(46) in tRNA + S-adenosyl-L-homocysteine. The protein operates within tRNA modification; N(7)-methylguanine-tRNA biosynthesis. Functionally, catalyzes the formation of N(7)-methylguanine at position 46 (m7G46) in tRNA. The sequence is that of tRNA (guanine-N(7)-)-methyltransferase from Prochlorococcus marinus subsp. pastoris (strain CCMP1986 / NIES-2087 / MED4).